Here is a 124-residue protein sequence, read N- to C-terminus: Glutaredoxin-2 (124 aa).

A disulfide bridge connects residues cysteine 13 and cysteine 16.

The protein belongs to the glutaredoxin family. In terms of assembly, homodimer.

The protein resides in the host cytoplasm. Its function is as follows. Glutaredoxin necessary for virion morphogenesis and virus replication. Functions as a thiol-disulfide transfer protein between membrane-associated OPG128 and substrates OPG095 or OPG053. The complete pathway for formation of disulfide bonds in intracellular virion membrane proteins sequentially involves oxidation of OPG072, OPG128 and OPG088. Exhibit thioltransferase and dehydroascorbate reductase activities in vitro. This is Glutaredoxin-2 (OPG088) from Bos taurus (Bovine).